The sequence spans 209 residues: Glutathione S-transferase F7 (209 aa).

The GST N-terminal domain maps to 2 to 83 (AGIKVFGHPA…YIAHFYSDKG (82 aa)). Residues 12–13 (ST), 41–42 (HK), 54–55 (KV), and 67–68 (ES) each bind glutathione. In terms of domain architecture, GST C-terminal spans 90–209 (GSKDIAGIAM…TSRPSAKKVL (120 aa)).

Belongs to the GST superfamily. Phi family.

The protein localises to the cytoplasm. It localises to the cytosol. The enzyme catalyses RX + glutathione = an S-substituted glutathione + a halide anion + H(+). May be involved in the conjugation of reduced glutathione to a wide number of exogenous and endogenous hydrophobic electrophiles and have a detoxification role against certain herbicides. The polypeptide is Glutathione S-transferase F7 (Arabidopsis thaliana (Mouse-ear cress)).